Here is a 327-residue protein sequence, read N- to C-terminus: Annexin A8 (327 aa).

4 Annexin repeats span residues F21–Y92, P93–Q164, G177–K249, and N253–G324. 4 residues coordinate Ca(2+): M266, G268, G270, and D310.

It belongs to the annexin family.

This protein is an anticoagulant protein that acts as an indirect inhibitor of the thromboplastin-specific complex, which is involved in the blood coagulation cascade. The sequence is that of Annexin A8 (ANXA8) from Bos taurus (Bovine).